A 252-amino-acid polypeptide reads, in one-letter code: MERLLIVNADDFGLSKGQNYGIIEACRNGVVTSTTALVNGEAIDHAAQLSRGAPGLAVGMHFVLTMGKPLTEMPGLTREGMLGKWIWQMAEEGALPLEEISLELASQYQRFIELFGRKPTHIDSHHHVHMFPQIFPIVASFAAEQGIALRIDRQAVFNDSDLPGELRSSQGFSSAFYGEEISNALFLKVLDDSSHRGERSLEVMCHPAFIDNTIRQSAYCFPRLTELDVLTSASLKYAIAERGYRLGSYLDV.

Residues His61 and His125 each contribute to the Mg(2+) site.

The protein belongs to the YdjC deacetylase family. ChbG subfamily. In terms of assembly, homodimer. Mg(2+) serves as cofactor.

The protein localises to the cytoplasm. It catalyses the reaction N,N'-diacetylchitobiose + H2O = N-acetyl-beta-D-glucosaminyl-(1-&gt;4)-D-glucosamine + acetate. It carries out the reaction diacetylchitobiose-6'-phosphate + H2O = N'-monoacetylchitobiose-6'-phosphate + acetate. It functions in the pathway glycan degradation; chitin degradation. Involved in the degradation of chitin. ChbG is essential for growth on the acetylated chitooligosaccharides chitobiose and chitotriose but is dispensable for growth on cellobiose and chitosan dimer, the deacetylated form of chitobiose. Deacetylation of chitobiose-6-P and chitotriose-6-P is necessary for both the activation of the chb promoter by the regulatory protein ChbR and the hydrolysis of phosphorylated beta-glucosides by the phospho-beta-glucosidase ChbF. Catalyzes the removal of only one acetyl group from chitobiose-6-P to yield monoacetylchitobiose-6-P, the inducer of ChbR and the substrate of ChbF. The protein is Chitooligosaccharide deacetylase of Escherichia fergusonii (strain ATCC 35469 / DSM 13698 / CCUG 18766 / IAM 14443 / JCM 21226 / LMG 7866 / NBRC 102419 / NCTC 12128 / CDC 0568-73).